Reading from the N-terminus, the 301-residue chain is Recombination-associated protein RdgC (301 aa).

This sequence belongs to the RdgC family.

The protein resides in the cytoplasm. It is found in the nucleoid. May be involved in recombination. The protein is Recombination-associated protein RdgC of Pseudoalteromonas atlantica (strain T6c / ATCC BAA-1087).